The sequence spans 473 residues: Adenosylhomocysteinase (473 aa).

Positions 60, 135, and 197 each coordinate substrate. NAD(+) is bound at residue threonine 198–threonine 200. Residues lysine 227 and aspartate 231 each coordinate substrate. NAD(+) is bound by residues asparagine 232, glycine 261 to glycine 266, glutamate 284, asparagine 319, isoleucine 340 to histidine 342, and asparagine 385.

This sequence belongs to the adenosylhomocysteinase family. NAD(+) is required as a cofactor.

It is found in the cytoplasm. The catalysed reaction is S-adenosyl-L-homocysteine + H2O = L-homocysteine + adenosine. It participates in amino-acid biosynthesis; L-homocysteine biosynthesis; L-homocysteine from S-adenosyl-L-homocysteine: step 1/1. Its function is as follows. May play a key role in the regulation of the intracellular concentration of adenosylhomocysteine. This Bradyrhizobium diazoefficiens (strain JCM 10833 / BCRC 13528 / IAM 13628 / NBRC 14792 / USDA 110) protein is Adenosylhomocysteinase.